Reading from the N-terminus, the 1140-residue chain is Condensin-2 complex subunit G2 (1140 aa).

Residues 460-493 (LLPALKSSLHDSSEKVRVAFVGMLLKIKAARAAK) form an HEAT repeat.

In terms of assembly, component of the condensin-2 complex, which contains the smc2 and smc4 heterodimer, and three non SMC subunits that probably regulate the complex: ncaph2, ncapd3 and ncapg2.

It is found in the nucleus. Regulatory subunit of the condensin-2 complex, a complex which establishes mitotic chromosome architecture and is involved in physical rigidity of the chromatid axis. Plays a role in the embryonic development of the head and kidney structures. The protein is Condensin-2 complex subunit G2 of Danio rerio (Zebrafish).